Here is a 172-residue protein sequence, read N- to C-terminus: Adenine phosphoribosyltransferase (172 aa).

This sequence belongs to the purine/pyrimidine phosphoribosyltransferase family. Homodimer.

It localises to the cytoplasm. The enzyme catalyses AMP + diphosphate = 5-phospho-alpha-D-ribose 1-diphosphate + adenine. The protein operates within purine metabolism; AMP biosynthesis via salvage pathway; AMP from adenine: step 1/1. Its function is as follows. Catalyzes a salvage reaction resulting in the formation of AMP, that is energically less costly than de novo synthesis. In Staphylococcus carnosus (strain TM300), this protein is Adenine phosphoribosyltransferase.